Consider the following 740-residue polypeptide: Catalase-peroxidase 2 (740 aa).

Residues 1–27 (MFKKTKPRISILALTISCAIYSGAALA) form the signal peptide. A cross-link (tryptophyl-tyrosyl-methioninium (Trp-Tyr) (with M-254)) is located at residues 106–228 (WHSAGTYRIY…LAAVQMGLIY (123 aa)). Catalysis depends on His-107, which acts as the Proton acceptor. Residues 228 to 254 (YVNPEGPNGVPDPLLAAKDIRDTFGRM) constitute a cross-link (tryptophyl-tyrosyl-methioninium (Tyr-Met) (with W-106)). His-269 contributes to the heme b binding site.

This sequence belongs to the peroxidase family. Peroxidase/catalase subfamily. As to quaternary structure, homodimer or homotetramer. It depends on heme b as a cofactor. In terms of processing, formation of the three residue Trp-Tyr-Met cross-link is important for the catalase, but not the peroxidase activity of the enzyme.

The catalysed reaction is H2O2 + AH2 = A + 2 H2O. The enzyme catalyses 2 H2O2 = O2 + 2 H2O. In terms of biological role, bifunctional enzyme with both catalase and broad-spectrum peroxidase activity. The protein is Catalase-peroxidase 2 of Cellvibrio japonicus (strain Ueda107) (Pseudomonas fluorescens subsp. cellulosa).